The chain runs to 372 residues: Serine/threonine-protein kinase 17B (372 aa).

Residues 33-293 enclose the Protein kinase domain; sequence TLTPKELGRG…AESCLSHSWL (261 aa). Residues 39–47 and K62 contribute to the ATP site; that span reads LGRGKFAVV. D158 acts as the Proton acceptor in catalysis. Residues 305-348 are disordered; that stretch reads EETSGSSQIQDLTLRSSEEKTSKSSCNGSCGAREDKENIPEDGS. The span at 307 to 319 shows a compositional bias: polar residues; that stretch reads TSGSSQIQDLTLR.

It belongs to the protein kinase superfamily. CAMK Ser/Thr protein kinase family. DAP kinase subfamily. Interacts with CHP1; the interaction induces CHP1 to translocate from the Golgi to the nucleus. Post-translationally, autophosphorylated.

The protein localises to the nucleus. The protein resides in the cell membrane. It localises to the endoplasmic reticulum-Golgi intermediate compartment. It carries out the reaction L-seryl-[protein] + ATP = O-phospho-L-seryl-[protein] + ADP + H(+). The catalysed reaction is L-threonyl-[protein] + ATP = O-phospho-L-threonyl-[protein] + ADP + H(+). In terms of biological role, acts as a positive regulator of apoptosis. Phosphorylates myosin light chains. The polypeptide is Serine/threonine-protein kinase 17B (Stk17b) (Mus musculus (Mouse)).